Consider the following 319-residue polypeptide: Acetyl-coenzyme A carboxylase carboxyl transferase subunit alpha (319 aa).

A CoA carboxyltransferase C-terminal domain is found at 35–296 (DLEKEIKQLE…KQRLLEQLKE (262 aa)).

This sequence belongs to the AccA family. Acetyl-CoA carboxylase is a heterohexamer composed of biotin carboxyl carrier protein (AccB), biotin carboxylase (AccC) and two subunits each of ACCase subunit alpha (AccA) and ACCase subunit beta (AccD).

The protein resides in the cytoplasm. It carries out the reaction N(6)-carboxybiotinyl-L-lysyl-[protein] + acetyl-CoA = N(6)-biotinyl-L-lysyl-[protein] + malonyl-CoA. Its pathway is lipid metabolism; malonyl-CoA biosynthesis; malonyl-CoA from acetyl-CoA: step 1/1. In terms of biological role, component of the acetyl coenzyme A carboxylase (ACC) complex. First, biotin carboxylase catalyzes the carboxylation of biotin on its carrier protein (BCCP) and then the CO(2) group is transferred by the carboxyltransferase to acetyl-CoA to form malonyl-CoA. The chain is Acetyl-coenzyme A carboxylase carboxyl transferase subunit alpha from Aliivibrio fischeri (strain ATCC 700601 / ES114) (Vibrio fischeri).